The sequence spans 485 residues: Ribulose bisphosphate carboxylase large chain (485 aa).

Positions 1 to 2 (MS) are excised as a propeptide. P3 bears the N-acetylproline mark. K14 carries the N6,N6,N6-trimethyllysine modification. The substrate site is built by N123 and T173. K175 (proton acceptor) is an active-site residue. Substrate is bound at residue K177. Mg(2+) is bound by residues K201, D203, and E204. Position 201 is an N6-carboxylysine (K201). Catalysis depends on H294, which acts as the Proton acceptor. Substrate contacts are provided by R295, H327, and S379.

It belongs to the RuBisCO large chain family. Type I subfamily. As to quaternary structure, heterohexadecamer of 8 large chains and 8 small chains; disulfide-linked. The disulfide link is formed within the large subunit homodimers. It depends on Mg(2+) as a cofactor. In terms of processing, the disulfide bond which can form in the large chain dimeric partners within the hexadecamer appears to be associated with oxidative stress and protein turnover.

The protein resides in the plastid. It localises to the chloroplast. The enzyme catalyses 2 (2R)-3-phosphoglycerate + 2 H(+) = D-ribulose 1,5-bisphosphate + CO2 + H2O. It catalyses the reaction D-ribulose 1,5-bisphosphate + O2 = 2-phosphoglycolate + (2R)-3-phosphoglycerate + 2 H(+). In terms of biological role, ruBisCO catalyzes two reactions: the carboxylation of D-ribulose 1,5-bisphosphate, the primary event in carbon dioxide fixation, as well as the oxidative fragmentation of the pentose substrate in the photorespiration process. Both reactions occur simultaneously and in competition at the same active site. The sequence is that of Ribulose bisphosphate carboxylase large chain from Bartlettina sordida (Purple torch).